A 241-amino-acid polypeptide reads, in one-letter code: Uridylate kinase (241 aa).

15-18 (KMSG) is an ATP binding site. Gly57 contacts UMP. ATP-binding residues include Gly58 and Arg62. Residues Asp77 and 138–145 (TGNPFFTT) each bind UMP. Residues Thr165, Tyr171, and Asp174 each contribute to the ATP site.

Belongs to the UMP kinase family. Homohexamer.

The protein localises to the cytoplasm. It catalyses the reaction UMP + ATP = UDP + ADP. Its pathway is pyrimidine metabolism; CTP biosynthesis via de novo pathway; UDP from UMP (UMPK route): step 1/1. With respect to regulation, inhibited by UTP. In terms of biological role, catalyzes the reversible phosphorylation of UMP to UDP. The polypeptide is Uridylate kinase (Dichelobacter nodosus (strain VCS1703A)).